The following is a 340-amino-acid chain: Short-chain dehydrogenase/reductase prx1 (340 aa).

Positions 60, 84, 104, 131, and 162 each coordinate NADP(+). S184 (proton donor) is an active-site residue. Residues Y210 and K214 each contribute to the NADP(+) site. Catalysis depends on Y210, which acts as the Proton acceptor. The active-site Lowers pKa of active site Tyr is the K214.

The protein belongs to the short-chain dehydrogenases/reductases (SDR) family.

Its pathway is sesquiterpene biosynthesis. In terms of biological role, short-chain dehydrogenase/reductase; part of the gene cluster that mediates the biosynthesis of PR-toxin, a bicyclic sesquiterpene belonging to the eremophilane class and acting as a mycotoxin. The first step of the pathway is catalyzed by the aristolochene synthase which performs the cyclization of trans,trans-farnesyl diphosphate (FPP) to the bicyclic sesquiterpene aristolochene. Following the formation of aristolochene, the non-oxygenated aristolochene is converted to the trioxygenated intermediate eremofortin B, via 7-epi-neopetasone. This conversion appears to involve three enzymes, a hydroxysterol oxidase-like enzyme, the quinone-oxidase prx3 that forms the quinone-type-structure in the bicyclic nucleus of aristolochene with the C8-oxo group and the C-3 hydroxyl group, and the P450 monooxygenase ORF6 that introduces the epoxide at the double bond between carbons 1 and 2. No monoxy or dioxy-intermediates have been reported to be released to the broth, so these three early oxidative reactions may be coupled together. Eremofortin B is further oxidized by another P450 monooxygenase, that introduces a second epoxide between carbons 7 and 11 prior to acetylation to eremofortin A by the acetyltransferase ORF8. The second epoxidation may be performed by a second P450 monooxygenase. After the acetylation step, eremofortin A is converted to eremofortin C and then to PR-toxin. First the conversion of eremofortin A to eremofortin C proceeds by oxidation of the side chain of the molecule at C-12 and is catalyzed by the short-chain oxidoreductase prx1. The cytochrome P450 monooxygenase ORF6 is probably also involved in this step. The primary alcohol formed at C-12 is finally oxidized by the short-chain alcohol dehydrogenase prx4 that forms PR-toxin. This Penicillium roqueforti (strain FM164) protein is Short-chain dehydrogenase/reductase prx1.